The primary structure comprises 314 residues: Methionyl-tRNA formyltransferase (314 aa).

Residue 112–115 coordinates (6S)-5,6,7,8-tetrahydrofolate; it reads SLLP.

It belongs to the Fmt family.

The catalysed reaction is L-methionyl-tRNA(fMet) + (6R)-10-formyltetrahydrofolate = N-formyl-L-methionyl-tRNA(fMet) + (6S)-5,6,7,8-tetrahydrofolate + H(+). Functionally, attaches a formyl group to the free amino group of methionyl-tRNA(fMet). The formyl group appears to play a dual role in the initiator identity of N-formylmethionyl-tRNA by promoting its recognition by IF2 and preventing the misappropriation of this tRNA by the elongation apparatus. The chain is Methionyl-tRNA formyltransferase from Aeromonas salmonicida (strain A449).